The chain runs to 978 residues: Sensor histidine kinase TodS (978 aa).

The region spanning 32–103 (CEEHARIIFD…TQKRLVETAS (72 aa)) is the PAS 1 domain. Residues 108–162 (VRCDVEILGKSGGREVIAVDFSLLPICNEEGSIVYLLAEGRNITDKKKAEAMLAL) enclose the PAC 1 domain. A Histidine kinase 1 domain is found at 187-405 (KVSHELRTPL…LFQVKLPLNA (219 aa)). Phosphohistidine; by autocatalysis is present on His190. The 116-residue stretch at 452–567 (RVLIVEDNPD…ELRARVSNLV (116 aa)) folds into the Response regulatory domain. The residue at position 500 (Asp500) is a 4-aspartylphosphate. Positions 611–681 (SEARWKAVYE…QRLANLLQGG (71 aa)) constitute a PAS 2 domain. The region spanning 685-737 (YSVERSYLCKNGSTIWANASVSLMPQRVGESPVILQIIDDITEKKQAQENLNQ) is the PAC 2 domain. Positions 757 to 974 (YIAHEINQPL…CFLVSIPARQ (218 aa)) constitute a Histidine kinase 2 domain. Residue His760 is modified to Phosphohistidine.

Homodimer. Binds as a dimer to a pseudopalindromic sequence. In terms of processing, autophosphorylated. Activation requires a sequential transfer of a phosphate group from a His in the primary transmitter domain, to an Asp in the receiver domain and to a His in the secondary transmitter domain.

The protein localises to the cytoplasm. The enzyme catalyses ATP + protein L-histidine = ADP + protein N-phospho-L-histidine.. Its function is as follows. Member of the two-component regulatory system TodS/TodT involved in the regulation of toluene degradation. Phosphorylates TodT via a four-step phosphorelay in response to toluene. This Pseudomonas putida (strain ATCC 700007 / DSM 6899 / JCM 31910 / BCRC 17059 / LMG 24140 / F1) protein is Sensor histidine kinase TodS (todS).